A 176-amino-acid polypeptide reads, in one-letter code: 3-hydroxyanthranilate 3,4-dioxygenase (176 aa).

R44 is a binding site for O2. 3 residues coordinate Fe cation: H48, E54, and H92. E54 contacts substrate. Substrate contacts are provided by R96 and E106. Residues C121, C124, C158, and C161 each coordinate Fe cation.

This sequence belongs to the 3-HAO family. Homodimer. The cofactor is Fe(2+).

It catalyses the reaction 3-hydroxyanthranilate + O2 = (2Z,4Z)-2-amino-3-carboxymuconate 6-semialdehyde. It functions in the pathway cofactor biosynthesis; NAD(+) biosynthesis; quinolinate from L-kynurenine: step 3/3. Catalyzes the oxidative ring opening of 3-hydroxyanthranilate to 2-amino-3-carboxymuconate semialdehyde, which spontaneously cyclizes to quinolinate. This chain is 3-hydroxyanthranilate 3,4-dioxygenase, found in Xanthomonas euvesicatoria pv. vesicatoria (strain 85-10) (Xanthomonas campestris pv. vesicatoria).